Here is a 277-residue protein sequence, read N- to C-terminus: WRKY transcription factor 68 (277 aa).

The segment at 51-96 is disordered; it reads TPLMHFPTTPNSSSSEAVNGDDEEEEDGEEQQHKTKKRFKFTKMSR. Residues 58-67 are compositionally biased toward polar residues; the sequence is TTPNSSSSEA. The span at 69–79 shows a compositional bias: acidic residues; it reads NGDDEEEEDGE. Residues 84-96 are compositionally biased toward basic residues; that stretch reads KTKKRFKFTKMSR. Residues 112 to 177 constitute a DNA-binding region (WRKY); the sequence is SEVLHLDDGY…YEGQHTHPRP (66 aa). Positions 183-206 are disordered; that stretch reads KEGSSPSNGSASRAHIGLPTLPPQ.

The protein belongs to the WRKY group II-c family.

Its subcellular location is the nucleus. Functionally, transcription factor. Interacts specifically with the W box (5'-(T)TGAC[CT]-3'), a frequently occurring elicitor-responsive cis-acting element. This is WRKY transcription factor 68 (WRKY68) from Arabidopsis thaliana (Mouse-ear cress).